The following is a 112-amino-acid chain: Large ribosomal subunit protein P2 (112 aa).

The segment covering 69–85 (AGGAAMPAAAAGGAPAA) has biased composition (low complexity). Residues 69 to 112 (AGGAAMPAAAAGGAPAAAEDKAEAKKPEAEPEEEEDDMGFSLFD) form a disordered region. Basic and acidic residues predominate over residues 86–97 (AEDKAEAKKPEA).

It belongs to the eukaryotic ribosomal protein P1/P2 family. In terms of assembly, P1 and P2 exist as dimers at the large ribosomal subunit. In terms of processing, phosphorylated.

Its function is as follows. Plays an important role in the elongation step of protein synthesis. This Babesia bovis protein is Large ribosomal subunit protein P2.